A 233-amino-acid chain; its full sequence is Zinc metalloproteinase recombinant fibrinogenase II (233 aa).

In terms of domain architecture, Peptidase M12B spans 19 to 215 (KYVETVFVVD…HNPECIDNEP (197 aa)). Glutamate 22 and aspartate 106 together coordinate Ca(2+). Intrachain disulfides connect cysteine 130–cysteine 210, cysteine 170–cysteine 194, and cysteine 172–cysteine 177. Position 155 (histidine 155) interacts with Zn(2+). Residue glutamate 156 is part of the active site. Residues histidine 159 and histidine 165 each coordinate Zn(2+). An N-linked (GlcNAc...) asparagine glycan is attached at asparagine 193. Positions 210, 213, 228, 230, and 232 each coordinate Ca(2+).

The protein belongs to the venom metalloproteinase (M12B) family. P-III subfamily. It depends on Zn(2+) as a cofactor. In terms of tissue distribution, expressed by the venom gland.

It is found in the secreted. Inhibited by PMSF and EDTA. Slightly inhibited by Cu(2+) and Zn(2+). Not inhibited by aprotinin, SBTI, Ca(2+), Mg(2+), Na(+) and K(+). Its function is as follows. Snake venom zinc metalloprotease that acts at several levels. It has direct fibrino(geno)lytic activity (Aalpha chain of fibrinogen is cleaved quickly, Bbeta chain slowly, and gamma chain even more slowly) and degradation of TNF-alpha. These activities permit to protect against sepsis and disseminated intravascular coagulation. It inhibits ADP-induced platelet aggregation in human platelet-rich plasma (IC(50)=65.4 ug/ml). It decreases the activity of complement by degrading human C5, C6 and C9 in vitro, decreasing serum levels of C1q, C3 and C4 in rat, and inhibiting the MAC deposition on HUVECs membrane. This inhibition of complement protects against hyperacute rejection that is the main barrier in xenotransplantation. Has preference for Lys at the P1 position. Cleaves insulin B chain at '36-Val-|-Glu-37', '39-Leu-|-Tyr-40', and '48-Phe-|-Phe-49' bonds. Also cleaves fibronectin and type IV collagen. The chain is Zinc metalloproteinase recombinant fibrinogenase II from Deinagkistrodon acutus (Hundred-pace snake).